A 212-amino-acid chain; its full sequence is Probable GTP-binding protein EngB (212 aa).

Residues 27 to 201 (GGIEIAFAGR…TRILSDWYQP (175 aa)) enclose the EngB-type G domain. GTP contacts are provided by residues 35-42 (GRSNAGKS), 62-66 (GRTQL), 80-83 (DLPG), 147-150 (TKAD), and 180-182 (FSS). The Mg(2+) site is built by serine 42 and threonine 64.

The protein belongs to the TRAFAC class TrmE-Era-EngA-EngB-Septin-like GTPase superfamily. EngB GTPase family. Requires Mg(2+) as cofactor.

Necessary for normal cell division and for the maintenance of normal septation. The chain is Probable GTP-binding protein EngB from Tolumonas auensis (strain DSM 9187 / NBRC 110442 / TA 4).